The sequence spans 499 residues: MESSTLLYTFLAVVLLSISLKLFPVSRRRRNLPPSPGLALPVIGHLHLIGKLLHRSLYDLSKKYGSVFSLQLGNRLVLVVSSPAAAEECFTKNDIVFANRPLFILGKYIGYNYTTMVGSPYGEHWRNLRRLAAVEIFSAGSLNRFLSIREDEVKQLLLSLYQSSGQDFGKVEMKSKLSELSFNVTMRMVAGKRYFGQDVDSDEAKLFRALIGEVFEHAGASNPGDFVPFLRWIDFKNYEKKVSKISQEMDAFLQRLIHESRINKNNVTMIDHLLSLQESQPEYYTDQIIKGIIMVLLLAGTDTSAVTVEWAMSLLLNHPETLEKARTEIETQVGSNRLIEEQDLPKLTYLHNIISETFRLCPAAPMLVPHESSDDCKVQGYDVPKGTILLVNAWAIHRDPEFWDEPTLFKPERHGGVELEPSKLMPFGMGRRSCPGSGLAQRVVGLTLGALIQCFEWKRIGEAKIDMAEGSGLTMPKAQPLEALCKPRNILHKVVSETS.

A helical membrane pass occupies residues 5–25 (TLLYTFLAVVLLSISLKLFPV). N-linked (GlcNAc...) asparagine glycans are attached at residues Asn112, Asn183, and Asn266. Cys434 serves as a coordination point for heme.

This sequence belongs to the cytochrome P450 family. As to expression, expressed in leaf epidermis and in the leaf internal phloem-associated parenchyma (IPAP) inside the mesophyll.

Its subcellular location is the membrane. The polypeptide is Cytochrome P450 81Q32 (Catharanthus roseus (Madagascar periwinkle)).